Here is a 201-residue protein sequence, read N- to C-terminus: Small ribosomal subunit protein uS4c (201 aa).

The tract at residues 20–43 is disordered; it reads GLTSKRPRAGSDLRNQSRAGKKSQ. In terms of domain architecture, S4 RNA-binding spans 89–150; the sequence is MRLDNILFRL…EQKSRVMIQN (62 aa).

It belongs to the universal ribosomal protein uS4 family. Part of the 30S ribosomal subunit. Contacts protein S5. The interaction surface between S4 and S5 is involved in control of translational fidelity.

The protein resides in the plastid. Its subcellular location is the chloroplast. One of the primary rRNA binding proteins, it binds directly to 16S rRNA where it nucleates assembly of the body of the 30S subunit. In terms of biological role, with S5 and S12 plays an important role in translational accuracy. The chain is Small ribosomal subunit protein uS4c (rps4) from Populus alba (White poplar).